A 150-amino-acid polypeptide reads, in one-letter code: Probable cyclic pyranopterin monophosphate synthase (150 aa).

Substrate contacts are provided by residues 68–70 (YCH) and 104–105 (ME). The active site involves Asp119.

Belongs to the MoaC family. As to quaternary structure, homohexamer; trimer of dimers.

The enzyme catalyses (8S)-3',8-cyclo-7,8-dihydroguanosine 5'-triphosphate = cyclic pyranopterin phosphate + diphosphate. Its pathway is cofactor biosynthesis; molybdopterin biosynthesis. Catalyzes the conversion of (8S)-3',8-cyclo-7,8-dihydroguanosine 5'-triphosphate to cyclic pyranopterin monophosphate (cPMP). The chain is Probable cyclic pyranopterin monophosphate synthase from Thermoplasma volcanium (strain ATCC 51530 / DSM 4299 / JCM 9571 / NBRC 15438 / GSS1).